A 381-amino-acid polypeptide reads, in one-letter code: Cytochrome b (381 aa).

4 helical membrane-spanning segments follow: residues 36 to 56 (FGSL…FLTM), 80 to 101 (WLIR…YIHI), 116 to 136 (WMVG…GYVL), and 181 to 201 (FYTF…IHLL). Positions 86 and 100 each coordinate heme b. Heme b-binding residues include His-185 and His-199. His-204 is a binding site for a ubiquinone. Transmembrane regions (helical) follow at residues 229–249 (FKDM…TLTN), 291–311 (LGGV…PLTF), 323–343 (MNQI…WIGA), and 350–370 (YVFV…INPM).

It belongs to the cytochrome b family. The main subunits of complex b-c1 are: cytochrome b, cytochrome c1 and the Rieske protein. Heme b is required as a cofactor.

It localises to the mitochondrion inner membrane. Functionally, component of the ubiquinol-cytochrome c reductase complex (complex III or cytochrome b-c1 complex) that is part of the mitochondrial respiratory chain. The b-c1 complex mediates electron transfer from ubiquinol to cytochrome c. Contributes to the generation of a proton gradient across the mitochondrial membrane that is then used for ATP synthesis. This Ostrinia nubilalis (European corn borer) protein is Cytochrome b (MT-CYB).